Consider the following 1028-residue polypeptide: MRKKVDERIRTLIENGVKLRHRSMFVIIGDKSRDQIVNLHHMLSKAVIKCNPSVLWCYKDKLDISSHKQKRSKQLKRLRERGQLDPEKLDAFSRLLDVGRVTHCLYKDSERILGNTFGMCILQDFEALTPNLLARTIETVEGGGLVVLILRSLTSLTSLCTMVMDVHDRFRTESHSEAAGRFNERFLLSLASCKACVVMDDELNILPLSSHIRSITQVPTEKDSEGLSEAERDLKSLKEDLSDDFPVGPLIKKCCTLDQGKAVVTFFDAILDKALRSIVALIASRGRGKSAALGLAVAGAVAAGYSNIYITAPSPDNLKTFFEFVCKGFDALEYKEHLDYDVVKSANPDFKKAVVRINIFKQHRQTIQYIQPHEHEKLSQVELLVIDEAAAIPLPVVKSLLGPYLVFLSSTVSGYEGTGRSLSLKLLQQLDEQSRAPATGLEGSGCLFKKIELTESIRYGSGDPIESWLNGLLCLDVATCLPNPACHPSPSQCDLYYVNRDTLFSYHKDSELFLQRMMALCVSSHYKNSPNDLQLLADAPAHHLFVLLGPVDESQNKIPDILCVIQVCLEGKISENSALQSLRDGHSPYGDQIPWKFCEQFRDTEFPGFSGARIVRIAVHPNAMKMGYGSAAVELLTRYFEGQIAPISEAEDKVDVEHAPIKVTEAAEKVSMLEEQVKPRTNLPPLLVPLHDRRPEKLHYIGVSFGLTLDLFRFWRKHNFAPFYVSQIPSAVTGEHTCMLLKPLKNDELEVNESDELGFFTPFYKDFKIRFSKLLSDKFKKMDYKLAMSVLNPKINFAEVDSSGSSSGGFLKTLNGILSPYDMERLRAYTENLTDFNLVYDICKTLAHQYFEEKLPVSLSYVQASILLCLGLQETDFSSIERQMQLERGQIHSLLLKVARELYKYLNGVAGKEIKSALPRLKERELTAHNVSVDDDIREGAKQVEEQMKKEKIEGLMDSELQQYVIGDKEAEALQHSKISSSGIISVKSTKSENENGFDKSTKKRSSDKRSSSSSKSKSSKKRKSLKE.

Residues 286 to 295 and arginine 458 each bind ATP; that span reads GRGKSAALGL. In terms of domain architecture, N-acetyltransferase spans 546–729; the sequence is VLLGPVDESQ…FAPFYVSQIP (184 aa). Residues 617–619, 624–630, and lysine 717 each bind acetyl-CoA; these read IAV and MKMGYGS. The disordered stretch occupies residues 982 to 1028; that stretch reads SGIISVKSTKSENENGFDKSTKKRSSDKRSSSSSKSKSSKKRKSLKE. The segment covering 990 to 1001 has biased composition (basic and acidic residues); it reads TKSENENGFDKS. Residues 1018 to 1028 show a composition bias toward basic residues; that stretch reads KSSKKRKSLKE.

The protein belongs to the RNA cytidine acetyltransferase family. NAT10 subfamily.

The protein localises to the nucleus. It localises to the nucleolus. The catalysed reaction is a cytidine in 18S rRNA + acetyl-CoA + ATP + H2O = an N(4)-acetylcytidine in 18S rRNA + ADP + phosphate + CoA + H(+). It carries out the reaction a cytidine in tRNA + acetyl-CoA + ATP + H2O = an N(4)-acetylcytidine in tRNA + ADP + phosphate + CoA + H(+). Its function is as follows. RNA cytidine acetyltransferase with specificity toward both 18S rRNA and tRNAs. Catalyzes the formation of N(4)-acetylcytidine (ac4C) in 18S rRNA. Required for early nucleolar cleavages of precursor rRNA at sites A0, A1 and A2 during 18S rRNA synthesis. Catalyzes the formation of ac4C in serine and leucine tRNAs. Requires a tRNA-binding adapter protein for full tRNA acetyltransferase activity but not for 18S rRNA acetylation. In Arabidopsis thaliana (Mouse-ear cress), this protein is RNA cytidine acetyltransferase 2.